The sequence spans 181 residues: MDRLLASLDDAPIVDKDGYEYLVHPISNGVPMLDPALLREVVIEVMQTADLNVDKIVAPEAMGIHLATAVSLQTDIPLVVIRKREYGLEGEVSLHQETGYSESEMYINDVEPGDRVVIIDDMLSTGGTLASICTALDDIGADISDIVVVMRKVGPSALDDTEFDATSLIDITVEDGEVVVH.

It belongs to the purine/pyrimidine phosphoribosyltransferase family. Archaeal HPRT subfamily.

May catalyze a purine salvage reaction, the substrate is unknown. This is HGPRTase-like protein 2 from Natrialba magadii (strain ATCC 43099 / DSM 3394 / CCM 3739 / CIP 104546 / IAM 13178 / JCM 8861 / NBRC 102185 / NCIMB 2190 / MS3) (Natronobacterium magadii).